We begin with the raw amino-acid sequence, 1711 residues long: MALFHNLEPKRSIDFMSGARTSSGSPSVSYSNSLPSPHTALVAPLSKMQRALWFDYISAPESTMYNLTLKFKLDQESEEYDGSISAILRAIDFLTKRHGMLRSTFHNSSNPSQPPYFAEIDSRHAHPTTHIVSSSEQLKRAALRGFDLSVDGPIRWIVFTNVKSNELYAVAHHIAVDGSSMSQLSKEIITLLTHYKHQSAEMLAPTTTSNYGLYCLAQDSYTHQESYKKALHFWSSQIAGTLPMEWNSSMLRTNPARLTQTTSQLDHRVCSTWLSLTPQELKAWGNLYKTSWFRVATALIGLLCAKHSKHKFRTDQSLLVAFGARPEQSNDVLGHFANGMPIKIPISMLERSESAQLGGFVKEVSKNISAAKREEMFPYVDLVQHARRNGLNSEHRVSVTFSPKLASDICSLYPVEGVCDLFFCFLEEEDGGAILGLIYDPQLFTPDAIQTLREDFIQLIRFSLSPEDATQSLASFPGLSARQQFNGPPLHDVVAIDQCRVHALVQQQATLRPEQLALYSEELQMYMTYEELEMATNQAAHCLRACGSCKGEVVALHLSHGFDMIIWIYAAFKSGAAFTVVDPSYPPTRKSAIFELSKAKICVYDSKTAPSLQWAIDENLCSVFITTAGSDNTPIDRFPTHPLTDEGSTLDDLAYIIFTSGSTGLPKGVMVAHRQLSHFVSAARDCTPVGPSVRALQVLSFSFDAAVLEYAATLVYGGTLCFAEHRDALVGDYLADVVDANKINHLTATPSILATLPAAREMPTLRSICVGGEHCPEGVLNTWRQRVQLIHAYGPTETTVAVTLHRLPREIDPEEVADGVSPSSIMGKPLPNVKIYVCDTSRRILKNGKIGELHISGPQVSRGYIDREELNAEKFWINEHGERTYASGDRGRILPDGTVLLYGRINNREIKVRGYRLELGEIEKMITKADTQVRTVSVQANVTGDGLLAFVTPRTVDTEALRLALAKYAPRYMIPSEILAIDALPCTVNDKVDHARVQRDMADLRARASKLGTASLLTPNDTPLQSPSPPLSDISQLDLTDDLEWAAAKARIAEIWRQVLAAPGPILGGVKFFEAGGNSLLVLKLKAEIEGAFGVKVSFSDLFQNSTVDSQVGLVQSRRGSSGSPRTVRSHARPQRKAKTPPRQARPETPESDYDQLPDLRDDVQQSICSIWMEVLGYHGKLDAKSNFFELGGTSLQIPILHKALLREFPASNVSLVKVFQSATLAAQVELLGRFTESPRFSPRPAITPSAAVVSRSPRRPSSPAREQYAIVGMSGRFPGASTIPEFWDLLVHQRDGIQAIGGLEDAPLGPNEVLVQRRGLIKDVEHFDHEFWKMPKNYALRMDPQKRHFLNVALEALDDAGIELDPQGQNDVGIFVGSSENTFREYCATRSEDAFEMRHSHHMDTAVSATAAYYLNTFGPNVTLNTACSSALVALKLGMDALATGQTKVVCVGGCTIEYPLQGYITEPGKVLSTTGEVRPFDAASDGSVPGDAVCAVIIKRATDALADGDQIYAFVDGAAVGSDGHLDKPGITVPSPRGQAETIKRAMQQAHARPEQIAHVEVHGSGTRMGDALELEGLSIAYDQHLGRQAGQRPVSVGSNKGNFGNCEAASGLVSIIKAALSISNGVVPPLRKLETVGDHVDFMRLNLTPAREPLRLSRHDKVGVTSLGLGGSTAHVVLSAPPGNARRTKEWKQIRELHPTLLPCGPAN.

Residues 43 to 397 are condensation (C) domain; sequence APLSKMQRAL…RNGLNSEHRV (355 aa). Positions 506 to 907 are adenylation (A) domain; sequence QQQATLRPEQ…TVLLYGRINN (402 aa). A Carrier 1 domain is found at 1043 to 1119; sequence LEWAAAKARI…SQVGLVQSRR (77 aa). Position 1079 is an O-(pantetheine 4'-phosphoryl)serine (serine 1079). A compositionally biased stretch (polar residues) spans 1114–1127; that stretch reads LVQSRRGSSGSPRT. The segment at 1114-1159 is disordered; that stretch reads LVQSRRGSSGSPRTVRSHARPQRKAKTPPRQARPETPESDYDQLPD. Residues 1128–1140 are compositionally biased toward basic residues; sequence VRSHARPQRKAKT. One can recognise a Carrier 2 domain in the interval 1159-1236; that stretch reads DLRDDVQQSI…AQVELLGRFT (78 aa). Position 1195 is an O-(pantetheine 4'-phosphoryl)serine (serine 1195). Residues 1266–1683 form the Ketosynthase family 3 (KS3) domain; the sequence is REQYAIVGMS…GSTAHVVLSA (418 aa). Catalysis depends on for beta-ketoacyl synthase activity residues cysteine 1429, histidine 1565, and asparagine 1608.

It in the N-terminal section; belongs to the NRP synthetase family. Pantetheine 4'-phosphate is required as a cofactor.

The catalysed reaction is acetoacetyl-CoA + L-isoleucine + ATP = tenuazonic acid + AMP + diphosphate + CoA + 2 H(+). Its function is as follows. Hybrid PKS-NRPS synthetase that mediates the biosynthesis of the toxin tenuazonic acid (TeA), an inhibitor of protein biosynthesis on ribosomes by suppressing the release of new protein. TAS1 alone is sufficient for TeA synthesis via the condensation of isoleucine (Ile) with acetoacetyl-CoA by the N-terminal NRPS module and subsequent cyclization conducted by the C-terminal KS domain. The chain is Hybrid PKS-NRPS synthetase TAS1 from Botryobasidium botryosum (strain FD-172 SS1).